The primary structure comprises 715 residues: Polyribonucleotide nucleotidyltransferase (715 aa).

Mg(2+) is bound by residues Asp487 and Asp493. The KH domain occupies Pro554–Ile613. In terms of domain architecture, S1 motif spans Gly623–Lys691.

The protein belongs to the polyribonucleotide nucleotidyltransferase family. Mg(2+) serves as cofactor.

Its subcellular location is the cytoplasm. The catalysed reaction is RNA(n+1) + phosphate = RNA(n) + a ribonucleoside 5'-diphosphate. Functionally, involved in mRNA degradation. Catalyzes the phosphorolysis of single-stranded polyribonucleotides processively in the 3'- to 5'-direction. The chain is Polyribonucleotide nucleotidyltransferase from Dechloromonas aromatica (strain RCB).